A 166-amino-acid polypeptide reads, in one-letter code: Prorelaxin H2 (166 aa).

A signal peptide spans Ser1 to Ala5. 3 disulfide bridges follow: Cys16/Cys153, Cys28/Cys166, and Cys152/Cys157. Residues Ser37–Ser138 constitute a propeptide, connecting peptide.

The protein belongs to the insulin family. In terms of assembly, heterodimer of a B chain and an A chain linked by two disulfide bonds. Expressed in the corpus luteum of pregnancy and in the placenta.

It is found in the secreted. In terms of biological role, relaxin is an ovarian hormone that acts with estrogen to produce dilatation of the birth canal in many mammals. May be involved in remodeling of connective tissues during pregnancy, promoting growth of pubic ligaments and ripening of the cervix. The polypeptide is Prorelaxin H2 (RNL2) (Pan troglodytes (Chimpanzee)).